The sequence spans 83 residues: MKILIFIIASFMLIGVECKEGYPMGRNGCKIPCAINDNICKVECQAKWKQSDGYCYSWGLSCYCTNLLEDAEVWDSSNNKCVG.

Positions 1-18 are cleaved as a signal peptide; that stretch reads MKILIFIIASFMLIGVEC. The LCN-type CS-alpha/beta domain occupies 19 to 82; it reads KEGYPMGRNG…VWDSSNNKCV (64 aa). 4 disulfides stabilise this stretch: cysteine 29–cysteine 81, cysteine 33–cysteine 55, cysteine 40–cysteine 62, and cysteine 44–cysteine 64.

It belongs to the long (4 C-C) scorpion toxin superfamily. Sodium channel inhibitor family. Beta subfamily. As to expression, expressed by the venom gland.

It localises to the secreted. Functionally, beta toxins bind voltage-independently at site-4 of sodium channels (Nav) and shift the voltage of activation toward more negative potentials thereby affecting sodium channel activation and promoting spontaneous and repetitive firing. This chain is Putative beta-neurotoxin RjAa15f, found in Rhopalurus junceus (Caribbean blue scorpion).